We begin with the raw amino-acid sequence, 122 residues long: uncharacterized protein (122 aa).

Helical transmembrane passes span 21–40 (VWSWRRLFIFRVLNVVSIAI), 57–77 (YTHMAIPLSTCLFCLCLCICI), and 94–114 (LLFSVFHLVFSTIALSIYCIY).

It is found in the membrane. This is an uncharacterized protein from Saccharomyces cerevisiae (strain ATCC 204508 / S288c) (Baker's yeast).